The sequence spans 149 residues: Cytochrome c-type biogenesis protein CcmE (149 aa).

Over Met1–Arg7 the chain is Cytoplasmic. The chain crosses the membrane as a helical; Signal-anchor for type II membrane protein span at residues Leu8–Ala28. The Periplasmic portion of the chain corresponds to Phe29–Lys149. Heme contacts are provided by His123 and Tyr127.

Belongs to the CcmE/CycJ family.

Its subcellular location is the cell inner membrane. In terms of biological role, heme chaperone required for the biogenesis of c-type cytochromes. Transiently binds heme delivered by CcmC and transfers the heme to apo-cytochromes in a process facilitated by CcmF and CcmH. The sequence is that of Cytochrome c-type biogenesis protein CcmE from Allorhizobium ampelinum (strain ATCC BAA-846 / DSM 112012 / S4) (Agrobacterium vitis (strain S4)).